The primary structure comprises 306 residues: Polyisoprenyl-teichoic acid--peptidoglycan teichoic acid transferase TagU (306 aa).

Residues 1–11 are Cytoplasmic-facing; that stretch reads MRNERRKKKKT. A helical; Signal-anchor for type II membrane protein membrane pass occupies residues 12–32; sequence LLLTILTIIGLLVLGTGGYAY. At 33–306 the chain is on the extracellular side; sequence YLWHKAASTV…TKELKESLEK (274 aa).

It belongs to the LytR/CpsA/Psr (LCP) family. Interacts with MreB. Interacts with FloT.

The protein localises to the cell membrane. Its subcellular location is the membrane raft. It functions in the pathway cell wall biogenesis. May catalyze the final step in cell wall teichoic acid biosynthesis, the transfer of the anionic cell wall polymers (APs) from their lipid-linked precursor to the cell wall peptidoglycan (PG). This Bacillus subtilis (strain 168) protein is Polyisoprenyl-teichoic acid--peptidoglycan teichoic acid transferase TagU.